A 339-amino-acid chain; its full sequence is Glycerol-3-phosphate dehydrogenase [NAD(P)+] (339 aa).

The NADPH site is built by Ser-15, Tyr-16, His-36, and Lys-110. Residues Lys-110, Gly-139, and Thr-141 each coordinate sn-glycerol 3-phosphate. Ala-143 is a binding site for NADPH. Lys-195, Asp-248, Ser-258, Arg-259, and Asn-260 together coordinate sn-glycerol 3-phosphate. The active-site Proton acceptor is Lys-195. Arg-259 is an NADPH binding site. NADPH is bound by residues Val-283 and Glu-285.

Belongs to the NAD-dependent glycerol-3-phosphate dehydrogenase family.

Its subcellular location is the cytoplasm. The catalysed reaction is sn-glycerol 3-phosphate + NAD(+) = dihydroxyacetone phosphate + NADH + H(+). The enzyme catalyses sn-glycerol 3-phosphate + NADP(+) = dihydroxyacetone phosphate + NADPH + H(+). The protein operates within membrane lipid metabolism; glycerophospholipid metabolism. Its function is as follows. Catalyzes the reduction of the glycolytic intermediate dihydroxyacetone phosphate (DHAP) to sn-glycerol 3-phosphate (G3P), the key precursor for phospholipid synthesis. This is Glycerol-3-phosphate dehydrogenase [NAD(P)+] from Enterobacter sp. (strain 638).